Reading from the N-terminus, the 536-residue chain is MATASVAFKSREDHRKKLELEEARKAGLAPAEVDEDGKEINPHIPEYMSKAPWYLKSEQPSLKHQKNWKIEPEPKKIWYDRGKKIYQAEQYRKGACINCGAMTHSSKACMDRPRKIGAKYTNMNIAADEKIESFELDYDGKRDRWNGYDTSTYRHVVDRYDAKEEARKKYLKEQQLKKLEEKNNNENGDDATSDGEEDLDDLRVDEAKVDESRQMDFAKVEKRVRTTGGGSTGTVRNLRIREDTAKYLLNLDVNSAHYDPKTRSMREDPLPDADPNEKFYLGDNQYRNSGQALEFKQINIHSCEAFDKGHDMHMQAAPSQAELLYKNFKVAKEKLKTQTKDTIMEKYGNAATEGEIPMELLLGQSERQIEYDRAGRIMKGQEVIIPKSKYEEDVHANNHTSVWGSWWKDHQWGYKCCQQTIRNSYCTGSAGIEAAEASIDLMKANIARKEASKESPKKVEEKKMATWGTDIPEDLELNEEALANALKKEDLSRREEKDERKRKYNVNYTNDVTSEEMEAYRMKRVHHEDPMRNFPG.

Positions 1–42 (MATASVAFKSREDHRKKLELEEARKAGLAPAEVDEDGKEINP) are disordered. Positions 9–25 (KSREDHRKKLELEEARK) are enriched in basic and acidic residues. A CCHC-type zinc finger spans residues 96–109 (CINCGAMTHSSKAC). Disordered regions lie at residues 176 to 201 (LKKL…DLDD) and 488 to 507 (KEDL…YNVN). Acidic residues predominate over residues 187 to 200 (NGDDATSDGEEDLD). At serine 193 the chain carries Phosphoserine. The short motif at 486–493 (LKKEDLSR) is the Nuclear localization signal element. The span at 488–501 (KEDLSRREEKDERK) shows a compositional bias: basic and acidic residues.

It belongs to the SLU7 family. As to quaternary structure, interacts with PHYB in photobodies under red light.

The protein localises to the nucleus. Participates in the second catalytic step of pre-mRNA splicing, when the free hydroxyl group of exon I attacks the 3'-splice site to generate spliced mRNA and the excised lariat intron. Splicing factor acting as a negative regulator of seedling photomorphogenesis by antagonizing PHYB signaling to promote light-induced hypocotyl elongation. Prevents the accumulation of functionally spliced RVE8a form, a circadian clock regulator mediating the transcriptional activation of clock genes containing evening elements (EE), but promotes PIF4 expression to fine-tune hypocotyl elongation in the light. Together with SMP1, involved in the timing of cell cycle arrest during leaf development, in a STRUWWELPETER (SWP) dependent manner; promotes cell proliferation in developing organs. The polypeptide is Pre-mRNA-splicing factor SLU7-B (Arabidopsis thaliana (Mouse-ear cress)).